We begin with the raw amino-acid sequence, 537 residues long: Oviduct-specific glycoprotein (537 aa).

An N-terminal signal peptide occupies residues 1 to 18 (LLLCVGLLLVLKHHDGAA). A GH18 domain is found at 19–382 (HKLVCYFTNW…HTLNNLLVND (364 aa)). Cysteines 23 and 48 form a disulfide. Chitin-binding positions include 68-69 (PQ), 95-98 (GGWN), Y139, 208-211 (LSYD), and W352. A glycan (N-linked (GlcNAc...) asparagine) is linked at N399. Disordered regions lie at residues 446–475 (EIAT…GEKP) and 498–537 (TGQK…ERRL). Positions 528-537 (GRAETLERRL) are enriched in basic and acidic residues.

The protein belongs to the glycosyl hydrolase 18 family. As to expression, oviduct.

The protein resides in the cytoplasmic vesicle. It localises to the secretory vesicle. Its function is as follows. Binds to oocyte zona pellucida in vivo. May play a role in the fertilization process and/or early embryonic development. This chain is Oviduct-specific glycoprotein (OVGP1), found in Bos taurus (Bovine).